Reading from the N-terminus, the 479-residue chain is MEKGLTLPQDCRDFVHSLKMRSKYALFLVFVVIVFVFIEKENKIISRVSDKLKQIPQALADANSTDPALILAENASLLSLSELDSAFSQLQSRLRNLSLQLGVEPAMEAAGEEEEEQRKEEEPPRPAVAGPRRHVLLMATTRTGSSFVGEFFNQQGNIFYLFEPLWHIERTVSFEPGGANAAGSALVYRDVLKQLFLCDLYVLEHFITPLPEDHLTQFMFRRGSSRSLCEDPVCTPFVKKVFEKYHCKNRRCGPLNVTLAAEACRRKEHMALKAVRIRQLEFLQPLAEDPRLDLRVIQLVRDPRAVLASRMVAFAGKYKTWKKWLDDEGQDGLREEEVQRLRGNCESIRLSAELGLRQPAWLRGRYMLVRYEDVARGPLQKAREMYRFAGIPLTPQVEDWIQKNTQAAHDGSGIYSTQKNSSEQFEKWRFSMPFKLAQVVQAACGPAMRLFGYKLARDAAALTNRSVSLLEERGTFWVT.

Residues 1 to 20 (MEKGLTLPQDCRDFVHSLKM) lie on the Cytoplasmic side of the membrane. Residues 21-38 (RSKYALFLVFVVIVFVFI) form a helical; Signal-anchor for type II membrane protein membrane-spanning segment. Over 39-479 (EKENKIISRV…LEERGTFWVT (441 aa)) the chain is Lumenal. 3 N-linked (GlcNAc...) asparagine glycosylation sites follow: N63, N74, and N96. Residues 108 to 128 (EAAGEEEEEQRKEEEPPRPAV) are disordered. 141-147 (TRTGSSF) is a binding site for 3'-phosphoadenylyl sulfate. N256 carries an N-linked (GlcNAc...) asparagine glycan. 3'-phosphoadenylyl sulfate is bound at residue 301 to 309 (RDPRAVLAS). Residues N420 and N464 are each glycosylated (N-linked (GlcNAc...) asparagine).

Belongs to the sulfotransferase 1 family. Gal/GlcNAc/GalNAc subfamily. In terms of processing, N-glycosylated. In terms of tissue distribution, widely expressed in adult tissues. Expressed in heart, placenta, skeletal muscle and pancreas. Also expressed in various immune tissues such as spleen, lymph node, thymus and appendix.

The protein localises to the golgi apparatus membrane. The catalysed reaction is chondroitin beta-D-glucuronate + n 3'-phosphoadenylyl sulfate = chondroitin 6'-sulfate + n adenosine 3',5'-bisphosphate + n H(+). It catalyses the reaction 3'-phosphoadenylyl sulfate + keratan = adenosine 3',5'-bisphosphate + keratan 6'-sulfate.. Functionally, sulfotransferase that utilizes 3'-phospho-5'-adenylyl sulfate (PAPS) as sulfonate donor to catalyze the transfer of sulfate to position 6 of the N-acetylgalactosamine (GalNAc) residue of chondroitin. Chondroitin sulfate constitutes the predominant proteoglycan present in cartilage and is distributed on the surfaces of many cells and extracellular matrices. Catalyzes with a lower efficiency the sulfation of Gal residues of keratan sulfate, another glycosaminoglycan. Can also catalyze the sulfation of the Gal residues in sialyl N-acetyllactosamine (sialyl LacNAc) oligosaccharides. May play a role in the maintenance of naive T-lymphocytes in the spleen. This chain is Carbohydrate sulfotransferase 3 (CHST3), found in Homo sapiens (Human).